The following is a 529-amino-acid chain: Tyrosinase (529 aa).

Residues 1 to 18 (MLLAVLYCLLWSFQTSAG) form the signal peptide. The Lumenal, melanosome segment spans residues 19 to 476 (HFPRACVSSK…YLEQASRIWS (458 aa)). N-linked (GlcNAc...) asparagine glycans are attached at residues Asn86, Asn111, and Asn161. His180, His202, and His211 together coordinate Cu cation. Residue Asn230 is glycosylated (N-linked (GlcNAc...) asparagine). Residues 287-313 (SLCNGTPEGPLRRNPGNHDKSRTPRLP) are disordered. Residue Asn337 is glycosylated (N-linked (GlcNAc...) asparagine). Residues His363 and His367 each coordinate Cu cation. The N-linked (GlcNAc...) asparagine glycan is linked to Asn371. A Cu cation-binding site is contributed by His390. The chain crosses the membrane as a helical span at residues 477 to 497 (WLLGAAMVGAVLTALLAGLVS). Topologically, residues 498–529 (LLCRHKRKQLPEEKQPLLMEKEDYHSLYQSHL) are cytoplasmic.

It belongs to the tyrosinase family. In terms of assembly, forms an OPN3-dependent complex with DCT in response to blue light in melanocytes. It depends on Cu(2+) as a cofactor. In terms of processing, glycosylated.

The protein localises to the melanosome membrane. It is found in the melanosome. The enzyme catalyses 2 L-dopa + O2 = 2 L-dopaquinone + 2 H2O. The catalysed reaction is L-tyrosine + O2 = L-dopaquinone + H2O. It carries out the reaction 2 5,6-dihydroxyindole-2-carboxylate + O2 = 2 indole-5,6-quinone-2-carboxylate + 2 H2O. Its function is as follows. This is a copper-containing oxidase that functions in the formation of pigments such as melanins and other polyphenolic compounds. Catalyzes the initial and rate limiting step in the cascade of reactions leading to melanin production from tyrosine. In addition to hydroxylating tyrosine to DOPA (3,4-dihydroxyphenylalanine), also catalyzes the oxidation of DOPA to DOPA-quinone, and possibly the oxidation of DHI (5,6-dihydroxyindole) to indole-5,6 quinone. This Homo sapiens (Human) protein is Tyrosinase.